A 74-amino-acid chain; its full sequence is uncharacterized protein (74 aa).

This is an uncharacterized protein from Saccharolobus islandicus (Sulfolobus islandicus).